Consider the following 608-residue polypeptide: FAD-binding monooxygenase ktnD (608 aa).

The N-linked (GlcNAc...) asparagine glycan is linked to Asn-4. A helical membrane pass occupies residues 17–37; that stretch reads ATVVIIGAGVSGMCMAIDLLH. Residues 56–59, 68–69, and Tyr-74 each bind FAD; these read TWAN and DV. NADP(+) is bound at residue 66–68; that stretch reads ASD. N-linked (GlcNAc...) asparagine glycosylation is present at Asn-114. Residues 201–207 and 224–225 each bind NADP(+); these read NGASAIQ and RS. Asn-325 carries an N-linked (GlcNAc...) asparagine glycan. The chain crosses the membrane as a helical span at residues 535-555; the sequence is ALVSNVTLFLGVALAAGGVYW.

This sequence belongs to the FAD-binding monooxygenase family. The cofactor is FAD.

It localises to the membrane. Non-reducing polyketide synthase; part of the gene cluster that mediates the biosynthesis of the bicoumarin kotanin. The non-reducing polyketide synthase ktnS first catalyzes the formation of the pentaketidic 4,7-dihydroxy-5-methylcoumarin from acetyl coenzyme A and 4 malonyl coenzyme A molecules. Further O-methylation by ktnB leads to the formation of 7-demethylsiderin. Then, an oxidative phenol coupling catalyzed by the cytochrome P450 monooxygenase ktnC forms the 8,8'-dimer P-orlandin via dimerization the monomeric precursor, 7-demethylsiderin. P-orlandin is subsequently O-methylated in a stepwise fashion to demethylkotanin and kotanin. The function of ktnD within the pathway has not been determined yet. The protein is FAD-binding monooxygenase ktnD of Aspergillus niger (strain ATCC MYA-4892 / CBS 513.88 / FGSC A1513).